The primary structure comprises 260 residues: Global transcriptional regulator CodY (260 aa).

The interval 1 to 159 (MPNLLEKTRK…SSTVVGIQLL (159 aa)) is GAF domain. Residues 207-226 (ASVIADRIGITRSVIVNALR) constitute a DNA-binding region (H-T-H motif).

The protein belongs to the CodY family.

The protein resides in the cytoplasm. Its function is as follows. DNA-binding global transcriptional regulator which is involved in the adaptive response to starvation and acts by directly or indirectly controlling the expression of numerous genes in response to nutrient availability. During rapid exponential growth, CodY is highly active and represses genes whose products allow adaptation to nutrient depletion. The protein is Global transcriptional regulator CodY of Streptococcus pyogenes serotype M3 (strain SSI-1).